Reading from the N-terminus, the 288-residue chain is Oxaloacetate decarboxylase (288 aa).

Ser47 contributes to the substrate binding site. Asp85 is a Mg(2+) binding site. Positions 156 and 232 each coordinate substrate.

The protein belongs to the isocitrate lyase/PEP mutase superfamily. Oxaloacetate decarboxylase family. In terms of assembly, homotetramer; dimer of dimers. Mg(2+) is required as a cofactor.

It catalyses the reaction oxaloacetate + H(+) = pyruvate + CO2. Functionally, catalyzes the decarboxylation of oxaloacetate into pyruvate. Seems to play a role in maintaining cellular concentrations of bicarbonate and pyruvate. This Rhodopseudomonas palustris (strain ATCC BAA-98 / CGA009) protein is Oxaloacetate decarboxylase.